A 338-amino-acid chain; its full sequence is Phytanoyl-CoA dioxygenase, peroxisomal (338 aa).

A peroxisome-targeting transit peptide spans 1–30 (MDYTRAGARLQVLLGHLGRPSALQIVAHPV). N6-succinyllysine is present on residues Lys-59 and Lys-108. Residues Lys-120, Met-157, 175–177 (HQD), and Trp-193 contribute to the 2-oxoglutarate site. The Fe cation site is built by His-175 and Asp-177. 2 positions are modified to N6-succinyllysine: Lys-231 and Lys-252. His-264 provides a ligand contact to Fe cation. Residues Ser-266 and Arg-275 each contribute to the 2-oxoglutarate site.

This sequence belongs to the PhyH family. Interacts specifically with FKBP52 and PHYHIP. It depends on Fe cation as a cofactor. L-ascorbate serves as cofactor. Requires ATP as cofactor. Mg(2+) is required as a cofactor.

The protein localises to the peroxisome. The enzyme catalyses phytanoyl-CoA + 2-oxoglutarate + O2 = 2-hydroxyphytanoyl-CoA + succinate + CO2. It carries out the reaction 3-methylhexadecanoyl-CoA + 2-oxoglutarate + O2 = 2-hydroxy-3-methylhexadecanoyl-CoA + succinate + CO2. It catalyses the reaction hexadecanoyl-CoA + 2-oxoglutarate + O2 = 2-hydroxyhexadecanoyl-CoA + succinate + CO2. The catalysed reaction is octanoyl-CoA + 2-oxoglutarate + O2 = 2-hydroxyoctanoyl-CoA + succinate + CO2. The enzyme catalyses decanoyl-CoA + 2-oxoglutarate + O2 = 2-hydroxydecanoyl-CoA + succinate + CO2. It carries out the reaction 3-methylbutanoyl-CoA + 2-oxoglutarate + O2 = 2-hydroxy-3-methylbutanoyl-CoA + succinate + CO2. It catalyses the reaction heptadecanoyl-CoA + 2-oxoglutarate + O2 = 2-hydroxyheptadecanoyl-CoA + succinate + CO2. The catalysed reaction is eicosanoyl-CoA + 2-oxoglutarate + O2 = 2-hydroxyeicosanoyl-CoA + succinate + CO2. The enzyme catalyses octadecanoyl-CoA + 2-oxoglutarate + O2 = 2-hydroxyoctadecanoyl-CoA + succinate + CO2. It carries out the reaction dodecanoyl-CoA + 2-oxoglutarate + O2 = 2-hydroxydodecanoyl-CoA + succinate + CO2. It catalyses the reaction tetradecanoyl-CoA + 2-oxoglutarate + O2 = 2-hydroxytetradecanoyl-CoA + succinate + CO2. The catalysed reaction is hexanoyl-CoA + 2-oxoglutarate + O2 = 2-hydroxyhexanoyl-CoA + succinate + CO2. The enzyme catalyses butanoyl-CoA + 2-oxoglutarate + O2 = 2-hydroxybutanoyl-CoA + succinate + CO2. It carries out the reaction 3-methylnonanoyl-CoA + 2-oxoglutarate + O2 = 2-hydroxy-3-methylnonanoyl-CoA + succinate + CO2. It catalyses the reaction 3-methylundecanoyl-CoA + 2-oxoglutarate + O2 = 2-hydroxy-3-methylundecanoyl-CoA + succinate + CO2. The catalysed reaction is 3-methyldodecanoyl-CoA + 2-oxoglutarate + O2 = 2-hydroxy-3-methyldodecanoyl-CoA + succinate + CO2. Its pathway is lipid metabolism; fatty acid metabolism. Catalyzes the 2-hydroxylation of racemic phytanoyl-CoA and the isomers of 3-methylhexadecanoyl-CoA. Shows activity also towards a variety of other mono-branched 3-methylacyl-CoA esters (with a chain length of at least seven carbon atoms) and straight-chain acyl-CoA esters (with a chain length longer than four carbon atoms). Does not hydroxylate long and very long straight chain acyl-CoAs or 2-methyl-and 4-methyl-branched acyl-CoAs. The chain is Phytanoyl-CoA dioxygenase, peroxisomal (Phyh) from Rattus norvegicus (Rat).